The primary structure comprises 1040 residues: Multidrug resistance protein MdtB (1040 aa).

A run of 12 helical transmembrane segments spans residues 16–36 (FIMR…AGII), 347–367 (LMMA…NIPA), 369–389 (IIPG…MVFL), 396–416 (LTLM…IVVI), 440–460 (IGFT…PLLF), 472–492 (FAIT…TLTP), 537–557 (WLTL…WVFI), 863–883 (LGST…VLGI), 888–908 (FIHP…ALLA), 911–931 (IAGS…IGIV), 968–988 (ILMT…STGV), and 998–1018 (IGMV…TPVI).

This sequence belongs to the resistance-nodulation-cell division (RND) (TC 2.A.6) family. MdtB subfamily. In terms of assembly, part of a tripartite efflux system composed of MdtA, MdtB and MdtC. MdtB forms a heteromultimer with MdtC.

Its subcellular location is the cell inner membrane. Its function is as follows. The MdtABC tripartite complex confers resistance against novobiocin and deoxycholate. The polypeptide is Multidrug resistance protein MdtB (Escherichia coli (strain SE11)).